The chain runs to 66 residues: MAKGKDARVTVILECTRCVRNGVNKQSIGISRYITQKNRHNTPSRLELRKFCPRCYKHTIHGEIKK.

This sequence belongs to the bacterial ribosomal protein bL33 family.

The protein localises to the plastid. It localises to the chloroplast. The protein is Large ribosomal subunit protein bL33c of Cucumis sativus (Cucumber).